A 374-amino-acid polypeptide reads, in one-letter code: Type IV secretion system protein PtlG homolog (374 aa).

The helical transmembrane segment at 38–56 (WMFALVAVALSCLLATGIW) threads the bilayer. Positions 87–116 (PREPEPAPLPDMPAAPNPILPQPRPAPPVP) are disordered. Residues 92-116 (PAPLPDMPAAPNPILPQPRPAPPVP) are compositionally biased toward pro residues.

It belongs to the TrbI/VirB10 family.

Its subcellular location is the cell membrane. The polypeptide is Type IV secretion system protein PtlG homolog (ptlG) (Bordetella parapertussis (strain 12822 / ATCC BAA-587 / NCTC 13253)).